The chain runs to 163 residues: Allophycocyanin alpha-B chain (163 aa).

N71 carries the post-translational modification N4-methylasparagine. C81 is a binding site for (2R,3E)-phycocyanobilin.

This sequence belongs to the phycobiliprotein family. As to quaternary structure, heterodimer of an alpha and a beta chain. Post-translationally, contains one covalently linked bilin chromophore.

It is found in the cellular thylakoid membrane. Its function is as follows. Light-harvesting photosynthetic bile pigment-protein from the phycobiliprotein complex. Allophycocyanin has a maximum absorption at approximately 650 nanometers. The chain is Allophycocyanin alpha-B chain from Synechococcus sp. (strain ATCC 27144 / PCC 6301 / SAUG 1402/1) (Anacystis nidulans).